The chain runs to 337 residues: Meiotic driver wtf4 (337 aa).

Basic and acidic residues predominate over residues 1-29 (MKNKDYPLRSSMDELSTKNDNEIDLEKGP). Positions 1-40 (MKNKDYPLRSSMDELSTKNDNEIDLEKGPLPEYNSEDEST) are disordered. Helical transmembrane passes span 89–109 (LLIS…CVNP), 119–139 (AFFV…FCFF), 149–169 (CIKV…VGLY), 176–196 (VVII…RSKF), 210–230 (CSIS…FWTL), and 234–254 (FSGL…TKGL).

Belongs to the WTF family. As to quaternary structure, homomer. Forms protein aggregates. The two isoforms can interact with each other and with themselves. High sequence similarity is required for their interaction.

Its subcellular location is the spore membrane. It localises to the vacuole membrane. The protein resides in the ascus epiplasm. The protein localises to the cytoplasm. It is found in the endoplasmic reticulum membrane. Functionally, promotes unequal transmission of alleles from the parental zygote to progeny spores by acting as poison/antidote system where the poison and antidote proteins are produced from the same locus; the poison component is trans-acting and targets all spores within an ascus whereas the antidote component is spore-specific, leading to poisoning of all progeny that do not inherit the allele. Localizes isoform 2 to the vacuole thereby facilitating its degradation. In terms of biological role, forms toxic aggregates that disrupt spore maturation. This chain is Meiotic driver wtf4, found in Schizosaccharomyces kambucha (Fission yeast).